The sequence spans 234 residues: Putative N-acetylmannosamine-6-phosphate 2-epimerase (234 aa).

This sequence belongs to the NanE family.

The catalysed reaction is an N-acyl-D-glucosamine 6-phosphate = an N-acyl-D-mannosamine 6-phosphate. Its pathway is amino-sugar metabolism; N-acetylneuraminate degradation; D-fructose 6-phosphate from N-acetylneuraminate: step 3/5. Converts N-acetylmannosamine-6-phosphate (ManNAc-6-P) to N-acetylglucosamine-6-phosphate (GlcNAc-6-P). This Klebsiella pneumoniae (strain 342) protein is Putative N-acetylmannosamine-6-phosphate 2-epimerase.